The primary structure comprises 341 residues: Aromatic amino acid aminotransferase (341 aa).

Lys213 is modified (N6-(pyridoxal phosphate)lysine).

Belongs to the class-II pyridoxal-phosphate-dependent aminotransferase family. As to quaternary structure, homodimer. The cofactor is pyridoxal 5'-phosphate.

The catalysed reaction is an aromatic L-alpha-amino acid + 2-oxoglutarate = an aromatic oxo-acid + L-glutamate. Functionally, aminotransferase that catalyzes the conversion of aromatic amino acids and 2-oxoglutarate into corresponding aromatic oxo acids and L-glutamate. May catalyze the transamination reaction in phenylalanine biosynthesis. This chain is Aromatic amino acid aminotransferase, found in Corynebacterium glutamicum (strain ATCC 13032 / DSM 20300 / JCM 1318 / BCRC 11384 / CCUG 27702 / LMG 3730 / NBRC 12168 / NCIMB 10025 / NRRL B-2784 / 534).